A 552-amino-acid chain; its full sequence is Urocanate hydratase (552 aa).

NAD(+) is bound by residues 50–51, Q128, 174–176, E194, R199, 261–265, 271–272, and Y320; these read GG, GMG, QTSAH, and YI. C408 is a catalytic residue. NAD(+) is bound at residue G490.

This sequence belongs to the urocanase family. NAD(+) serves as cofactor.

It localises to the cytoplasm. It catalyses the reaction 4-imidazolone-5-propanoate = trans-urocanate + H2O. The protein operates within amino-acid degradation; L-histidine degradation into L-glutamate; N-formimidoyl-L-glutamate from L-histidine: step 2/3. In terms of biological role, catalyzes the conversion of urocanate to 4-imidazolone-5-propionate. The sequence is that of Urocanate hydratase from Bdellovibrio bacteriovorus (strain ATCC 15356 / DSM 50701 / NCIMB 9529 / HD100).